The primary structure comprises 453 residues: Secreted aspartic protease 10 (453 aa).

An N-terminal signal peptide occupies residues 1 to 20 (MDLVIMNFVFLLYLTSVVKC). Residues 52-372 (YTTELEIGSN…DLQDMTISVA (321 aa)) enclose the Peptidase A1 domain. Asp-70 is an active-site residue. 70-72 (DTG) contacts pepstatin A. Cys-85 and Cys-112 are joined by a disulfide. Residues Asn-115 and Asn-128 are each glycosylated (N-linked (GlcNAc...) asparagine). A pepstatin A-binding site is contributed by 138 to 139 (VD). 4 N-linked (GlcNAc...) asparagine glycosylation sites follow: Asn-168, Asn-208, Asn-211, and Asn-245. Asp-266 is an active-site residue. 266-270 (DTGST) contributes to the pepstatin A binding site. N-linked (GlcNAc...) asparagine glycosylation occurs at Asn-287. An intrachain disulfide couples Cys-301 to Cys-333. Residues 387–432 (NPNEDQNEVPTSTSFTQSASSSGSQPSSTISGENMDKNTTSSSSGN) are disordered. Residues 397-417 (TSTSFTQSASSSGSQPSSTIS) are compositionally biased toward low complexity. A compositionally biased stretch (polar residues) spans 423–432 (KNTTSSSSGN). Asn-424 carries N-linked (GlcNAc...) asparagine glycosylation. A lipid anchor (GPI-anchor amidated serine) is attached at Ser-429. The propeptide at 430–453 (SGNCQTRSWIAILSALFLVYIHII) is removed in mature form.

The protein belongs to the peptidase A1 family. In terms of processing, the GPI-anchor is attached to the protein in the endoplasmic reticulum and serves to target the protein to the cell surface. There, the glucosamine-inositol phospholipid moiety is cleaved off and the GPI-modified mannoprotein is covalently attached via its lipidless GPI glycan remnant to the 1,6-beta-glucan of the outer cell wall layer.

Its subcellular location is the secreted. It is found in the cell membrane. It catalyses the reaction Preferential cleavage at the carboxyl of hydrophobic amino acids, but fails to cleave 15-Leu-|-Tyr-16, 16-Tyr-|-Leu-17 and 24-Phe-|-Phe-25 of insulin B chain. Activates trypsinogen, and degrades keratin.. In terms of biological role, secreted aspartic peptidases (SAPs) are a group of ten acidic hydrolases considered as key virulence factors. These enzymes supply the fungus with nutrient amino acids as well as are able to degrade the selected host's proteins involved in the immune defense. Required for cell surface integrity and cell separation during budding. The protein is Secreted aspartic protease 10 of Candida albicans (strain SC5314 / ATCC MYA-2876) (Yeast).